Reading from the N-terminus, the 458-residue chain is O-acetyltransferase dmxR13 (458 aa).

A disordered region spans residues 211–231 (ELARQISQPRPPPSSDGPPPP). Pro residues predominate over residues 219 to 231 (PRPPPSSDGPPPP).

The protein belongs to the trichothecene 3-O-acetyltransferase family.

The protein operates within secondary metabolite biosynthesis. Functionally, O-acetyltransferase; part of the gene cluster that mediates the biosynthesis of the dimeric xanthones cryptosporioptides. The pathway begins with the synthesis of atrochrysone thioester by the polyketide synthase dmx-nrPKS. The atrochrysone carboxyl ACP thioesterase dmxR1 then breaks the thioester bond and releases the atrochrysone carboxylic acid from dmx-nrPKS. Atrochrysone carboxylic acid is decarboxylated by the decarboxylase dmxR15, and oxidized by the anthrone oxygenase dmxR16 to yield emodin. Emodin is then reduced to emodin hydroquinone by the oxidoreductase dmxR7. A-ring reduction by the short chain dehydrogenase dmxR18, dehydration by the scytalone dehydratase-like protein dmxR17 and probable spontaneous re-oxidation, results in overall deoxygenation to chrysophanol. Baeyer-Villiger oxidation by the Baeyer-Villiger monooxygenase (BVMO) dmxR6 then yields monodictylactone in equilibrium with monodictyphenone. In the case of the cryptosporioptides biosynthesis, monodictylactone is reduced at C-12 to an alcohol (by the short chain dehydrogenases dmxR12 or dmxR8) and hydroxylated at C-5 by dmxR9, yielding the electron-rich aromatic which could eliminate H(2)O to form the ortho-quinonemethide, followed by tautomerisation to paraquinone and complete the formal reduction to produce the 10-methylgroup. Conjugate addition of C-4a-OH to the resulting paraquinone by the monooxygenase dmxR10 then gives cyclohexadienone, which is then reduced at C-5 by the short chain dehydrogenase dmxR3 to give the dihydroxanthone. The 6,7-epoxide in the cryptosporioptides could be introduced by the cytochrome P450 monooxygenase dmxL3. The highly reducing PKS dmxL2 manufactures butyrate, which is further carboxylated by dmxL1 to form ethylmalonate. It is not yet clear whether the carboxylation occurs while the butyrate is attached to the ACP of dmxL2, but this unusual fungal metabolite could then be esterified to O-5 by the O-acetyltransferase dmxR13. Finally, dimerization performed by dmxR5 gives the observed dimers cryptosporioptides A, B and C as the final products of the pathway. In Cryptosporiopsis sp. (strain 8999), this protein is O-acetyltransferase dmxR13.